The primary structure comprises 332 residues: Anthranilate phosphoribosyltransferase (332 aa).

Residues Gly-78, 81–82 (GD), Ser-86, 88–91 (NIST), 106–114 (KHGNKSITS), and Ser-118 contribute to the 5-phospho-alpha-D-ribose 1-diphosphate site. Residue Gly-78 coordinates anthranilate. A Mg(2+)-binding site is contributed by Ser-90. Asn-109 contacts anthranilate. Arg-163 provides a ligand contact to anthranilate. 2 residues coordinate Mg(2+): Asp-222 and Glu-223.

Belongs to the anthranilate phosphoribosyltransferase family. As to quaternary structure, homodimer. The cofactor is Mg(2+).

The catalysed reaction is N-(5-phospho-beta-D-ribosyl)anthranilate + diphosphate = 5-phospho-alpha-D-ribose 1-diphosphate + anthranilate. Its pathway is amino-acid biosynthesis; L-tryptophan biosynthesis; L-tryptophan from chorismate: step 2/5. Catalyzes the transfer of the phosphoribosyl group of 5-phosphorylribose-1-pyrophosphate (PRPP) to anthranilate to yield N-(5'-phosphoribosyl)-anthranilate (PRA). This chain is Anthranilate phosphoribosyltransferase, found in Staphylococcus aureus (strain USA300).